The sequence spans 837 residues: Striatin-interacting protein 1 (837 aa).

At M1 the chain carries N-acetylmethionine. Disordered regions lie at residues 1–67 (MEPA…ESPD) and 333–423 (AASP…KGLP). Pro residues predominate over residues 18-35 (PQPPPPPPPATAQPPPGA). The segment covering 36–46 (PRAAAGLLPGG) has biased composition (low complexity). Residues 47–60 (KAREFNRNQRKDSE) are compositionally biased toward basic and acidic residues. S59, S335, and S339 each carry phosphoserine. The span at 333–343 (AASPPASASDS) shows a compositional bias: low complexity. A compositionally biased stretch (basic and acidic residues) spans 356–377 (KALIKQDNLDAFNERDPYKADD). Over residues 378 to 391 (SREEEEENDDDNSL) the composition is skewed to acidic residues. S788 bears the Phosphoserine mark. The interval 796-837 (DNCLQSVLGQRVDLPEDFQMNYDLWLEREVFSKPISWEELLQ) is required for STRIPAK core complex formation.

This sequence belongs to the STRIP family. In terms of assembly, part of the core of STRIPAK complexes composed of PP2A catalytic and scaffolding subunits, the striatins (PP2A regulatory subunits), the striatin-associated proteins MOB4, STRIP1 and STRIP2, PDCD10 and members of the STE20 kinases, such as STK24 and STK26. The STRIPAK complex can be extended by adapter proteins such as SLMAP:SIKE1, CTTNBP2 or CTTNBP2NL. Interacts with CDC42BPB. Interacts with CTTNBP2NL.

It localises to the cytoplasm. Functionally, plays a role in the regulation of cell morphology and cytoskeletal organization. Required in the cortical actin filament dynamics and cell shape. Part of the striatin-interacting phosphatase and kinase (STRIPAK) complexes. STRIPAK complexes have critical roles in protein (de)phosphorylation and are regulators of multiple signaling pathways including Hippo, MAPK, nuclear receptor and cytoskeleton remodeling. Different types of STRIPAK complexes are involved in a variety of biological processes such as cell growth, differentiation, apoptosis, metabolism and immune regulation. The sequence is that of Striatin-interacting protein 1 (STRIP1) from Pongo abelii (Sumatran orangutan).